We begin with the raw amino-acid sequence, 242 residues long: ATP-dependent dethiobiotin synthetase BioD (242 aa).

12–17 (EVGKTV) provides a ligand contact to ATP. A Mg(2+)-binding site is contributed by Thr16. Residue Lys37 is part of the active site. Ser41 lines the substrate pocket. ATP-binding positions include Asp51 and 112–115 (EGAG). Positions 51 and 112 each coordinate Mg(2+).

It belongs to the dethiobiotin synthetase family. Homodimer. Mg(2+) serves as cofactor.

The protein localises to the cytoplasm. It catalyses the reaction (7R,8S)-7,8-diammoniononanoate + CO2 + ATP = (4R,5S)-dethiobiotin + ADP + phosphate + 3 H(+). It participates in cofactor biosynthesis; biotin biosynthesis; biotin from 7,8-diaminononanoate: step 1/2. In terms of biological role, catalyzes a mechanistically unusual reaction, the ATP-dependent insertion of CO2 between the N7 and N8 nitrogen atoms of 7,8-diaminopelargonic acid (DAPA, also called 7,8-diammoniononanoate) to form a ureido ring. The polypeptide is ATP-dependent dethiobiotin synthetase BioD (Bacillus thuringiensis subsp. konkukian (strain 97-27)).